A 193-amino-acid polypeptide reads, in one-letter code: Transcriptional repressor NrdR (193 aa).

A zinc finger spans residues 3–34 (CPYCGGLDTQVKDSRPSEDASAIRRRRICPDC). The 91-residue stretch at 49-139 (LTVVKRSGRK…VYKNFREAKD (91 aa)) folds into the ATP-cone domain. A disordered region spans residues 150 to 193 (DQQDGAVPQAEADRPIGAGPPSEAAQPAAGEGGDAPMRRARSRA).

It belongs to the NrdR family. The cofactor is Zn(2+).

In terms of biological role, negatively regulates transcription of bacterial ribonucleotide reductase nrd genes and operons by binding to NrdR-boxes. This is Transcriptional repressor NrdR from Methylobacterium nodulans (strain LMG 21967 / CNCM I-2342 / ORS 2060).